Reading from the N-terminus, the 151-residue chain is MPTFKLVLSDPLSGKARQFEIKDPLAQRFVGLRIGEEIDGTVLKELIELPKGVKIRITGGSGVEGAPMHPGVPGPVKRYILADGPPGYRPRKRGMRKKKLVRGDTITDSIVQINAVLVYPEGYSGPPAIPLGAKELEKLKGGKTEEAAASQ.

This sequence belongs to the eukaryotic ribosomal protein eS6 family.

In Pyrobaculum calidifontis (strain DSM 21063 / JCM 11548 / VA1), this protein is Small ribosomal subunit protein eS6.